The primary structure comprises 185 residues: Ribosome-recycling factor (185 aa).

Positions 138-185 are disordered; it reads ALKKQEKDGEITEDEERRLEKEVQKVTDESTKKIDQMADNKRKEIIQG.

It belongs to the RRF family.

The protein resides in the cytoplasm. Functionally, responsible for the release of ribosomes from messenger RNA at the termination of protein biosynthesis. May increase the efficiency of translation by recycling ribosomes from one round of translation to another. The polypeptide is Ribosome-recycling factor (Lactobacillus delbrueckii subsp. bulgaricus (strain ATCC BAA-365 / Lb-18)).